The sequence spans 68 residues: Conotoxin TsMMSK-021 (68 aa).

Residues 1 to 20 form the signal peptide; sequence MMSKLGVLLTICLLLFPLTA. Positions 21 to 50 are excised as a propeptide; the sequence is VPLDGDQHADRPADRMQDISSEQHPLFDPV. Disulfide bonds link C53-C66, C54-C62, and C58-C65. 4-hydroxyproline is present on P64.

This sequence belongs to the conotoxin M superfamily. As to expression, expressed by the venom duct.

The protein localises to the secreted. This chain is Conotoxin TsMMSK-021, found in Conus tessulatus (Tessellate cone).